The primary structure comprises 205 residues: MSILAYNGGCVVAMRGKDCVAIATDHRFGIQAQTISTDFKKVFHIGPRMFLGLTGLQTDILTVRDRLMFRKNLYETRENREMCPKPFSAMMSSFLYEHRFGPYFIEPVVAGLDPKTMEPFICNMDLIGCPNAPDDFVVAGTCAEQLYGMCETLWKPDLEPDQLFEVIAQSIVNAFDRDAMSGWGATVYIIEKDKITERTLKTRMD.

It belongs to the peptidase T1B family. In terms of assembly, the 26S proteasome consists of a 20S proteasome core and two 19S regulatory subunits. The 20S proteasome core is composed of 28 subunits that are arranged in four stacked rings, resulting in a barrel-shaped structure. The two end rings are each formed by seven alpha subunits, and the two central rings are each formed by seven beta subunits. The catalytic chamber with the active sites is on the inside of the barrel.

The protein resides in the cytoplasm. It localises to the nucleus. In terms of biological role, non-catalytic component of the proteasome, a multicatalytic proteinase complex which is characterized by its ability to cleave peptides with Arg, Phe, Tyr, Leu, and Glu adjacent to the leaving group at neutral or slightly basic pH. The proteasome has an ATP-dependent proteolytic activity. This chain is Proteasome subunit beta type-3, found in Drosophila melanogaster (Fruit fly).